The chain runs to 291 residues: D-alanyl-D-alanine carboxypeptidase (291 aa).

The first 29 residues, 1 to 29, serve as a signal peptide directing secretion; sequence MRLRRAAATVITTGALLAAGTLGATPATA. The active-site Acyl-ester intermediate is Ser-64. Lys-67 acts as the Proton acceptor in catalysis. The active site involves Ser-125. Position 242 (Lys-242) interacts with substrate.

This sequence belongs to the peptidase S11 family.

The protein localises to the secreted. It carries out the reaction Preferential cleavage: (Ac)2-L-Lys-D-Ala-|-D-Ala. Also transpeptidation of peptidyl-alanyl moieties that are N-acyl substituents of D-alanine.. Its pathway is cell wall biogenesis; peptidoglycan biosynthesis. Functionally, removes C-terminal D-alanyl residues from sugar-peptide cell wall precursors. The protein is D-alanyl-D-alanine carboxypeptidase of Streptomyces sp. (strain K15).